Reading from the N-terminus, the 705-residue chain is Elongation factor G (705 aa).

Residues 8–290 enclose the tr-type G domain; it reads HRYRNIGIMA…GVIHLLPSPA (283 aa). GTP contacts are provided by residues 17-24, 88-92, and 142-145; these read AHIDAGKT, DTPGH, and NKMD.

This sequence belongs to the TRAFAC class translation factor GTPase superfamily. Classic translation factor GTPase family. EF-G/EF-2 subfamily.

It is found in the cytoplasm. Catalyzes the GTP-dependent ribosomal translocation step during translation elongation. During this step, the ribosome changes from the pre-translocational (PRE) to the post-translocational (POST) state as the newly formed A-site-bound peptidyl-tRNA and P-site-bound deacylated tRNA move to the P and E sites, respectively. Catalyzes the coordinated movement of the two tRNA molecules, the mRNA and conformational changes in the ribosome. This is Elongation factor G from Xylella fastidiosa (strain 9a5c).